The chain runs to 49 residues: uncharacterized protein (49 aa).

This sequence belongs to the metallo-dependent hydrolases superfamily. TatD-type hydrolase family. Requires a divalent metal cation as cofactor.

This is an uncharacterized protein from Geobacillus stearothermophilus (Bacillus stearothermophilus).